A 191-amino-acid chain; its full sequence is Fe/S biogenesis protein NfuA (191 aa).

[4Fe-4S] cluster is bound by residues Cys-149 and Cys-152.

This sequence belongs to the NfuA family. In terms of assembly, homodimer. It depends on [4Fe-4S] cluster as a cofactor.

In terms of biological role, involved in iron-sulfur cluster biogenesis. Binds a 4Fe-4S cluster, can transfer this cluster to apoproteins, and thereby intervenes in the maturation of Fe/S proteins. Could also act as a scaffold/chaperone for damaged Fe/S proteins. The chain is Fe/S biogenesis protein NfuA from Enterobacter sp. (strain 638).